A 258-amino-acid chain; its full sequence is Indole-3-glycerol phosphate synthase (258 aa).

This sequence belongs to the TrpC family.

It carries out the reaction 1-(2-carboxyphenylamino)-1-deoxy-D-ribulose 5-phosphate + H(+) = (1S,2R)-1-C-(indol-3-yl)glycerol 3-phosphate + CO2 + H2O. Its pathway is amino-acid biosynthesis; L-tryptophan biosynthesis; L-tryptophan from chorismate: step 4/5. The polypeptide is Indole-3-glycerol phosphate synthase (Chlorobium phaeobacteroides (strain DSM 266 / SMG 266 / 2430)).